The following is a 258-amino-acid chain: UPF0246 protein YaaA (258 aa).

The protein belongs to the UPF0246 family.

This Escherichia coli (strain UTI89 / UPEC) protein is UPF0246 protein YaaA.